The chain runs to 109 residues: uncharacterized protein (109 aa).

Transmembrane regions (helical) follow at residues 19-39 (LELV…CLIP) and 53-73 (YFID…FYPF).

The protein resides in the membrane. This is an uncharacterized protein from Saccharomyces cerevisiae (strain ATCC 204508 / S288c) (Baker's yeast).